A 207-amino-acid chain; its full sequence is High frequency lysogenization protein HflD homolog (207 aa).

This sequence belongs to the HflD family.

Its subcellular location is the cytoplasm. The protein resides in the cell inner membrane. This Tolumonas auensis (strain DSM 9187 / NBRC 110442 / TA 4) protein is High frequency lysogenization protein HflD homolog.